The chain runs to 342 residues: Protein RecA 1 (342 aa).

ATP is bound at residue 68-75 (GNESSGKT).

Belongs to the RecA family.

It localises to the cytoplasm. Functionally, can catalyze the hydrolysis of ATP in the presence of single-stranded DNA, the ATP-dependent uptake of single-stranded DNA by duplex DNA, and the ATP-dependent hybridization of homologous single-stranded DNAs. It interacts with LexA causing its activation and leading to its autocatalytic cleavage. In Myxococcus xanthus, this protein is Protein RecA 1.